A 509-amino-acid chain; its full sequence is ATP synthase subunit alpha (509 aa).

Residue 169 to 176 (GDRQTGKT) participates in ATP binding.

Belongs to the ATPase alpha/beta chains family. As to quaternary structure, F-type ATPases have 2 components, CF(1) - the catalytic core - and CF(0) - the membrane proton channel. CF(1) has five subunits: alpha(3), beta(3), gamma(1), delta(1), epsilon(1). CF(0) has three main subunits: a(1), b(2) and c(9-12). The alpha and beta chains form an alternating ring which encloses part of the gamma chain. CF(1) is attached to CF(0) by a central stalk formed by the gamma and epsilon chains, while a peripheral stalk is formed by the delta and b chains.

It localises to the cell inner membrane. The catalysed reaction is ATP + H2O + 4 H(+)(in) = ADP + phosphate + 5 H(+)(out). Functionally, produces ATP from ADP in the presence of a proton gradient across the membrane. The alpha chain is a regulatory subunit. In Methylorubrum extorquens (strain CM4 / NCIMB 13688) (Methylobacterium extorquens), this protein is ATP synthase subunit alpha.